Reading from the N-terminus, the 759-residue chain is Phosphoribosylformylglycinamidine synthase subunit PurL (759 aa).

The active site involves His61. ATP contacts are provided by Tyr64 and Lys105. Residue Glu107 coordinates Mg(2+). Residues 108-111 and Arg130 contribute to the substrate site; that span reads SHNH. The active-site Proton acceptor is His109. Asp131 serves as a coordination point for Mg(2+). Substrate is bound at residue Gln260. Asp288 contributes to the Mg(2+) binding site. 332-334 is a binding site for substrate; it reads ESQ. Asp520 and Gly557 together coordinate ATP. Position 558 (Asn558) interacts with Mg(2+). Ser560 lines the substrate pocket.

The protein belongs to the FGAMS family. As to quaternary structure, monomer. Part of the FGAM synthase complex composed of 1 PurL, 1 PurQ and 2 PurS subunits.

It is found in the cytoplasm. The catalysed reaction is N(2)-formyl-N(1)-(5-phospho-beta-D-ribosyl)glycinamide + L-glutamine + ATP + H2O = 2-formamido-N(1)-(5-O-phospho-beta-D-ribosyl)acetamidine + L-glutamate + ADP + phosphate + H(+). Its pathway is purine metabolism; IMP biosynthesis via de novo pathway; 5-amino-1-(5-phospho-D-ribosyl)imidazole from N(2)-formyl-N(1)-(5-phospho-D-ribosyl)glycinamide: step 1/2. Functionally, part of the phosphoribosylformylglycinamidine synthase complex involved in the purines biosynthetic pathway. Catalyzes the ATP-dependent conversion of formylglycinamide ribonucleotide (FGAR) and glutamine to yield formylglycinamidine ribonucleotide (FGAM) and glutamate. The FGAM synthase complex is composed of three subunits. PurQ produces an ammonia molecule by converting glutamine to glutamate. PurL transfers the ammonia molecule to FGAR to form FGAM in an ATP-dependent manner. PurS interacts with PurQ and PurL and is thought to assist in the transfer of the ammonia molecule from PurQ to PurL. In Thermoplasma volcanium (strain ATCC 51530 / DSM 4299 / JCM 9571 / NBRC 15438 / GSS1), this protein is Phosphoribosylformylglycinamidine synthase subunit PurL.